The following is a 103-amino-acid chain: uncharacterized protein (103 aa).

This is an uncharacterized protein from Bacillus subtilis (strain 168).